Reading from the N-terminus, the 170-residue chain is Small ribosomal subunit protein bS16 (170 aa).

The segment at 109–170 (ALAEAEGGPS…AAESEAPAAE (62 aa)) is disordered. Over residues 131–150 (AKKDEQPTEKAAEPAAEKAA) the composition is skewed to basic and acidic residues. A compositionally biased stretch (low complexity) spans 151-170 (EPAAEAPAEAAAESEAPAAE).

It belongs to the bacterial ribosomal protein bS16 family.

This Mycolicibacterium gilvum (strain PYR-GCK) (Mycobacterium gilvum (strain PYR-GCK)) protein is Small ribosomal subunit protein bS16.